We begin with the raw amino-acid sequence, 445 residues long: GTPase Der (445 aa).

2 EngA-type G domains span residues 3–167 and 180–353; these read PVIA…YAGQ and IKIA…AAAM. GTP is bound by residues 9–16, 56–60, 119–122, 186–193, 233–237, and 298–301; these read GRPNVGKS, DTGGF, NKAE, DTAGL, and NKWD. In terms of domain architecture, KH-like spans 354 to 438; the sequence is AKLPTPKLTR…PLRIEFRSSN (85 aa).

The protein belongs to the TRAFAC class TrmE-Era-EngA-EngB-Septin-like GTPase superfamily. EngA (Der) GTPase family. In terms of assembly, associates with the 50S ribosomal subunit.

GTPase that plays an essential role in the late steps of ribosome biogenesis. This Burkholderia lata (strain ATCC 17760 / DSM 23089 / LMG 22485 / NCIMB 9086 / R18194 / 383) protein is GTPase Der.